A 77-amino-acid polypeptide reads, in one-letter code: Small ribosomal subunit protein bS20 (77 aa).

Residues 47–77 are disordered; the sequence is ASSSIDKAESKGLIHKNKASRDKARLAAKLG.

It belongs to the bacterial ribosomal protein bS20 family.

Its function is as follows. Binds directly to 16S ribosomal RNA. This is Small ribosomal subunit protein bS20 from Streptococcus pyogenes serotype M1.